An 89-amino-acid chain; its full sequence is Small ribosomal subunit protein uS15 (89 aa).

It belongs to the universal ribosomal protein uS15 family. Part of the 30S ribosomal subunit. Forms a bridge to the 50S subunit in the 70S ribosome, contacting the 23S rRNA.

In terms of biological role, one of the primary rRNA binding proteins, it binds directly to 16S rRNA where it helps nucleate assembly of the platform of the 30S subunit by binding and bridging several RNA helices of the 16S rRNA. Its function is as follows. Forms an intersubunit bridge (bridge B4) with the 23S rRNA of the 50S subunit in the ribosome. This Nocardia farcinica (strain IFM 10152) protein is Small ribosomal subunit protein uS15.